A 367-amino-acid chain; its full sequence is Molybdopterin synthase catalytic subunit (367 aa).

Residues 101–102 (HR), K117, and 124–126 (KKE) each bind substrate. The disordered stretch occupies residues 326-345 (HFTKREPSSMEAAPPKKIRK).

Belongs to the MoaE family. MOCS2B subfamily. Heterotetramer; composed of 2 small (Mocs2A) and 2 large (Mocs2B) subunits.

The protein localises to the cytoplasm. It carries out the reaction 2 [molybdopterin-synthase sulfur-carrier protein]-C-terminal-Gly-aminoethanethioate + cyclic pyranopterin phosphate + H2O = molybdopterin + 2 [molybdopterin-synthase sulfur-carrier protein]-C-terminal Gly-Gly + 2 H(+). It functions in the pathway cofactor biosynthesis; molybdopterin biosynthesis. Functionally, catalytic subunit of the molybdopterin synthase complex, a complex that catalyzes the conversion of precursor Z into molybdopterin. Acts by mediating the incorporation of 2 sulfur atoms from thiocarboxylated Mocs2A into precursor Z to generate a dithiolene group. The chain is Molybdopterin synthase catalytic subunit from Drosophila sechellia (Fruit fly).